Consider the following 476-residue polypeptide: Viral inhibitor of caspase-8-induced apoptosis (476 aa).

Belongs to the herpesviridae US22 family. As to quaternary structure, interacts with host pro-caspase-8/CASP8; this interaction inhibits CASP8 activation.

In terms of biological role, plays a role in the inhibition of apoptosis by interacting with the pro-domain of pro-caspase-8/CASP8 and thus preventing its activation. This Human cytomegalovirus (strain Merlin) (HHV-5) protein is Viral inhibitor of caspase-8-induced apoptosis (UL36).